The following is a 293-amino-acid chain: Phosphate-binding protein PstS 2 (293 aa).

A signal peptide spans 1-23 (MKKHKMLSLLAVSGLMGIGILAG). Cys24 is lipidated: N-palmitoyl cysteine. Residue Cys24 is the site of S-diacylglycerol cysteine attachment.

It belongs to the PstS family. As to quaternary structure, the complex is composed of two ATP-binding proteins (PstB), two transmembrane proteins (PstC and PstA) and a solute-binding protein (PstS).

Its subcellular location is the cell membrane. Part of the ABC transporter complex PstSACB involved in phosphate import. The protein is Phosphate-binding protein PstS 2 (pstS2) of Streptococcus agalactiae serotype III (strain NEM316).